Reading from the N-terminus, the 89-residue chain is UPF0250 protein Bphyt_0500 (89 aa).

The protein belongs to the UPF0250 family.

The protein is UPF0250 protein Bphyt_0500 of Paraburkholderia phytofirmans (strain DSM 17436 / LMG 22146 / PsJN) (Burkholderia phytofirmans).